Here is a 109-residue protein sequence, read N- to C-terminus: U16-hexatoxin-Hi1a (109 aa).

Positions L1–Q16 are cleaved as a signal peptide. A propeptide spanning residues V17–R43 is cleaved from the precursor.

In terms of processing, contains 2 disulfide bonds. As to expression, expressed by the venom gland.

The protein resides in the secreted. In terms of biological role, probable ion channel inhibitor. The protein is U16-hexatoxin-Hi1a of Hadronyche infensa (Fraser island funnel-web spider).